The primary structure comprises 896 residues: Translation initiation factor IF-2 (896 aa).

Residues 32 to 306 (LAQAGSSDTK…HKTKKQSEEH (275 aa)) are disordered. 2 stretches are compositionally biased toward polar residues: residues 35-48 (AGSSDTKNSPVSKA) and 114-126 (ADSTEPLSNSSQE). Positions 156–170 (ARNEETPIIRTRTEP) are enriched in basic and acidic residues. Residues 213 to 237 (QQTRPSVETASTKQQQPSGTNTRPA) show a composition bias toward polar residues. The span at 256–280 (RGPDRDRTKRSDENVKAFTGRDRYG) shows a compositional bias: basic and acidic residues. The 170-residue stretch at 401-570 (IRSPIVAFMG…ALQAEVLELK (170 aa)) folds into the tr-type G domain. The segment at 410–417 (GHVDHGKT) is G1. Residue 410–417 (GHVDHGKT) coordinates GTP. The G2 stretch occupies residues 435 to 439 (AITQH). Residues 456 to 459 (DTPG) form a G3 region. GTP contacts are provided by residues 456-460 (DTPGH) and 510-513 (NKCD). A G4 region spans residues 510–513 (NKCD). The G5 stretch occupies residues 546–548 (SAK).

It belongs to the TRAFAC class translation factor GTPase superfamily. Classic translation factor GTPase family. IF-2 subfamily.

It localises to the cytoplasm. Functionally, one of the essential components for the initiation of protein synthesis. Protects formylmethionyl-tRNA from spontaneous hydrolysis and promotes its binding to the 30S ribosomal subunits. Also involved in the hydrolysis of GTP during the formation of the 70S ribosomal complex. The polypeptide is Translation initiation factor IF-2 (infB) (Chlamydia muridarum (strain MoPn / Nigg)).